The primary structure comprises 396 residues: Tyrosine--tRNA ligase (396 aa).

Tyr36 is an L-tyrosine binding site. The 'HIGH' region motif lies at 41-50; that stretch reads PTANSLHIGN. L-tyrosine-binding residues include Tyr165 and Gln169. Residues 225 to 229 carry the 'KMSKS' region motif; that stretch reads KMGKT. Lys228 is a binding site for ATP. An S4 RNA-binding domain is found at 331–394; that stretch reads TNLIDYLVET…KKSFLTIKTV (64 aa).

The protein belongs to the class-I aminoacyl-tRNA synthetase family. TyrS type 1 subfamily. Homodimer.

It is found in the cytoplasm. The catalysed reaction is tRNA(Tyr) + L-tyrosine + ATP = L-tyrosyl-tRNA(Tyr) + AMP + diphosphate + H(+). In terms of biological role, catalyzes the attachment of tyrosine to tRNA(Tyr) in a two-step reaction: tyrosine is first activated by ATP to form Tyr-AMP and then transferred to the acceptor end of tRNA(Tyr). This Mycoplasma genitalium (strain ATCC 33530 / DSM 19775 / NCTC 10195 / G37) (Mycoplasmoides genitalium) protein is Tyrosine--tRNA ligase.